The following is a 342-amino-acid chain: Deoxyhypusine synthase regulatory subunit (342 aa).

Residues 72-76 (SNLIS), 98-100 (TAG), Glu104, Asp213, 282-283 (TG), and 316-317 (DA) contribute to the NAD(+) site.

The protein belongs to the deoxyhypusine synthase family. As to quaternary structure, heterotetramer formed by a homodimer of the non-catalytic regulatory subunit DHSp and a homodimer of the catalytic subunit DHSc where DHSc appears to bind spermidine and DHSp appears to bind NAD(+).

It participates in protein modification; eIF5A hypusination. Its function is as follows. Required for the activation and stability of deoxyhypusine synthase DHSc. Required for cell growth and survival. This chain is Deoxyhypusine synthase regulatory subunit, found in Trypanosoma brucei brucei (strain 927/4 GUTat10.1).